Reading from the N-terminus, the 118-residue chain is DNA-binding protein MmarC5_1518 (118 aa).

Residues 1–12 show a composition bias toward basic and acidic residues; sequence MNPEEIRQRRLQ. The interval 1–35 is disordered; it reads MNPEEIRQRRLQEMQAKAQEQGAEDPEAQRQAQEQ.

Belongs to the PDCD5 family.

In Methanococcus maripaludis (strain C5 / ATCC BAA-1333), this protein is DNA-binding protein MmarC5_1518.